A 76-amino-acid polypeptide reads, in one-letter code: Omega-conotoxin-like TxMKLT1-0211 (76 aa).

An N-terminal signal peptide occupies residues methionine 1 to alanine 22. A propeptide spanning residues valine 23–arginine 52 is cleaved from the precursor. 3 cysteine pairs are disulfide-bonded: cysteine 53-cysteine 67, cysteine 60-cysteine 71, and cysteine 66-cysteine 75.

The protein belongs to the conotoxin O1 superfamily. As to expression, expressed by the venom duct.

It is found in the secreted. Functionally, omega-conotoxins act at presynaptic membranes, they bind and block voltage-gated calcium channels (Cav). This Conus textile (Cloth-of-gold cone) protein is Omega-conotoxin-like TxMKLT1-0211.